The chain runs to 98 residues: NADH-ubiquinone oxidoreductase chain 4L (98 aa).

The next 3 helical transmembrane spans lie at Met-1 to Leu-21, Ser-29 to Leu-49, and Ile-61 to Val-81.

This sequence belongs to the complex I subunit 4L family. In terms of assembly, core subunit of respiratory chain NADH dehydrogenase (Complex I) which is composed of 45 different subunits.

The protein resides in the mitochondrion inner membrane. It catalyses the reaction a ubiquinone + NADH + 5 H(+)(in) = a ubiquinol + NAD(+) + 4 H(+)(out). Functionally, core subunit of the mitochondrial membrane respiratory chain NADH dehydrogenase (Complex I) which catalyzes electron transfer from NADH through the respiratory chain, using ubiquinone as an electron acceptor. Part of the enzyme membrane arm which is embedded in the lipid bilayer and involved in proton translocation. This is NADH-ubiquinone oxidoreductase chain 4L (MT-ND4L) from Platyrrhinus dorsalis (Thomas's broad-nosed bat).